A 352-amino-acid polypeptide reads, in one-letter code: Protein RecA (352 aa).

65-72 (GPESSGKT) contacts ATP.

It belongs to the RecA family.

The protein localises to the cytoplasm. In terms of biological role, can catalyze the hydrolysis of ATP in the presence of single-stranded DNA, the ATP-dependent uptake of single-stranded DNA by duplex DNA, and the ATP-dependent hybridization of homologous single-stranded DNAs. It interacts with LexA causing its activation and leading to its autocatalytic cleavage. The protein is Protein RecA of Pseudomonas fluorescens (strain SBW25).